The chain runs to 89 residues: UPF0223 protein Bcer98_2663 (89 aa).

Belongs to the UPF0223 family.

The chain is UPF0223 protein Bcer98_2663 from Bacillus cytotoxicus (strain DSM 22905 / CIP 110041 / 391-98 / NVH 391-98).